Reading from the N-terminus, the 870-residue chain is DNA mismatch repair protein MutS (870 aa).

Gly620–Ser627 serves as a coordination point for ATP.

It belongs to the DNA mismatch repair MutS family.

Functionally, this protein is involved in the repair of mismatches in DNA. It is possible that it carries out the mismatch recognition step. This protein has a weak ATPase activity. The protein is DNA mismatch repair protein MutS of Syntrophotalea carbinolica (strain DSM 2380 / NBRC 103641 / GraBd1) (Pelobacter carbinolicus).